Consider the following 402-residue polypeptide: Advanced glycosylation end product-specific receptor (402 aa).

The N-terminal stretch at 1-22 (MPAGTAARAWVLVLALWGAVAG) is a signal peptide. The Ig-like V-type domain occupies 23 to 109 (GQNITARIGE…ATNRRGKEVK (87 aa)). Over 23 to 340 (GQNITARIGE…VGESGLGTLA (318 aa)) the chain is Extracellular. Residues Asn-25 and Asn-80 are each glycosylated (N-linked (GlcNAc...) asparagine). Cystine bridges form between Cys-38/Cys-98 and Cys-143/Cys-206. Ig-like C2-type domains are found at residues 123–219 (PEIV…RPLN) and 233–315 (PEGI…PPVS). Positions 295–332 (GTYSCVATHPSHGPQESPPVSIRVTETGDEGPAEGSVG) are disordered. Residues 341 to 361 (LALGILGGLGVVALLVGAILW) form a helical membrane-spanning segment. The Cytoplasmic portion of the chain corresponds to 362-402 (RKRQPRREERKAPESQEDEEERAELNQSEEAEMPENGAGGP). Residues 365–402 (QPRREERKAPESQEDEEERAELNQSEEAEMPENGAGGP) are disordered. Phosphoserine; by ATM occurs at positions 376 and 389. Over residues 376–394 (SQEDEEERAELNQSEEAEM) the composition is skewed to acidic residues.

Constitutive homodimer; disulfide-linked. Forms homooligomers. Interacts with S100A1 and APP. Interacts with S100B, S100A12 and S100A14. Interacts with TIRAP. Interacts with HMGB1. Interacts with LGP2; this interaction plays an important role in AGER-mediated pro-inflammatory responses and cytokine release. Interacts with double-strand break repair protein MRE11 which is a core component of the MRN complex; the interaction enhances MRE11 endonuclease activity and promotes DNA repair. Interacts with the MCM2-7 complex via interaction with complex member MCM2; the interaction is increased following DNA replication stress and stabilizes the MCM2-7 complex at replication forks. Post-translationally, phosphorylated on its cytoplasmic domain by PKCzeta/PRKCZ upon ligand binding. Phosphorylated by ATM following DNA damage. Targeted by the ubiquitin E3 ligase subunit FBXO10 to mediate its ubiquitination and degradation. As to expression, isoform 1: Expressed at higher levels in the coronary arterioles in type 2 diabetic mice (at protein level). Endothelial cells. Expressed in lung, kidney, brain and heart. Most prevalent isoform with the highest level in heart. Isoform 2: Expressed in brain, lung, kidney and small intestine with the highest level in lung. Expressed in brain, lung, kidney and small intestine with the highest level in small intestine (at protein level). Detected in neurons of the cerebrum, bronchial epithelium, endothelial cells, tubular cells of kidney and epithelial cells of small intestine (at protein level). Expression is increased in the kidney of diabetic wild-type mice (at protein level), but not in the other tissues. Expressed only in kidney. Expression is increased in the kidney of diabetic mice. Isoform 3: Expressed in lung, kidney and heart. The second most prevalent isoform with the highest level in lung. Not expressed in brain. Isoform 4: Expressed at very low level in lung only. Isoform 5: Expressed at very low level in lung only. Isoform 6: Expressed at very low level in lung only. Isoform 7: Expressed at very low level in heart only. Isoform 8: Expressed at very low level in lung only. Isoform 9: Expressed at very low level in heart only. Isoform 10: Expressed in lung, brain, heart and kidney with a very high level in kidney. Isoform 11: Expressed in brain, kidney and heart. Not expressed in lung. Isoform 12: Expressed at very low level in lung and kidney. Isoform 13: Expressed at very low level in lung only.

The protein resides in the cell membrane. The protein localises to the cell projection. Its subcellular location is the phagocytic cup. It localises to the early endosome. It is found in the nucleus. The protein resides in the secreted. Its function is as follows. Cell surface pattern recognition receptor that senses endogenous stress signals with a broad ligand repertoire including advanced glycation end products, S100 proteins, high-mobility group box 1 protein/HMGB1, amyloid beta/APP oligomers, nucleic acids, histones, phospholipids and glycosaminoglycans. Advanced glycosylation end products are nonenzymatically glycosylated proteins which accumulate in vascular tissue in aging and at an accelerated rate in diabetes. These ligands accumulate at inflammatory sites during the pathogenesis of various diseases including diabetes, vascular complications, neurodegenerative disorders and cancers, and RAGE transduces their binding into pro-inflammatory responses. Upon ligand binding, uses TIRAP and MYD88 as adapters to transduce the signal ultimately leading to the induction of inflammatory cytokines IL6, IL8 and TNFalpha through activation of NF-kappa-B. Interaction with S100A12 on endothelium, mononuclear phagocytes, and lymphocytes triggers cellular activation, with generation of key pro-inflammatory mediators. Interaction with S100B after myocardial infarction may play a role in myocyte apoptosis by activating ERK1/2 and p53/TP53 signaling. Contributes to the translocation of amyloid-beta peptide (ABPP) across the cell membrane from the extracellular to the intracellular space in cortical neurons. ABPP-initiated RAGE signaling, especially stimulation of p38 mitogen-activated protein kinase (MAPK), has the capacity to drive a transport system delivering ABPP as a complex with RAGE to the intraneuronal space. Participates in endothelial albumin transcytosis together with HMGB1 through the RAGE/SRC/Caveolin-1 pathway, leading to endothelial hyperpermeability. Mediates the loading of HMGB1 in extracellular vesicles (EVs) that shuttle HMGB1 to hepatocytes by transferrin-mediated endocytosis and subsequently promote hepatocyte pyroptosis by activating the NLRP3 inflammasome. Binds to DNA and promotes extracellular hypomethylated DNA (CpG DNA) uptake by cells via the endosomal route to activate inflammatory responses. Mediates phagocytosis by non-professional phagocytes (NPP) and this is enhanced by binding to ligands including RNA, DNA, HMGB1 and histones. Promotes NPP-mediated phagocytosis of Saccharomyces cerevisiae spores by binding to RNA attached to the spore wall. Also promotes NPP-mediated phagocytosis of apoptotic cells. Following DNA damage, recruited to DNA double-strand break sites where it colocalizes with the MRN repair complex via interaction with double-strand break repair protein MRE11. Enhances the endonuclease activity of MRE11, promoting the end resection of damaged DNA. Promotes DNA damage repair in trophoblasts which enhances trophoblast invasion and contributes to placental development and maintenance. Protects cells from DNA replication stress by localizing to damaged replication forks where it stabilizes the MCM2-7 complex and promotes faithful progression of the replication fork. Functionally, is able to advanced glycosylation end product (AGE)-induce nuclear factor NF-kappa-B activation. Down-regulates receptor for advanced glycosylation end products (RAGE)-ligand induced signaling through various MAPK pathways including ERK1/2, p38 and SAPK/JNK. Significantly affects tumor cell properties through decreasing cell migration, invasion, adhesion and proliferation, and increasing cellular apoptosis. Exhibits drastic inhibition on tumorigenesis in vitro. The chain is Advanced glycosylation end product-specific receptor (Ager) from Mus musculus (Mouse).